We begin with the raw amino-acid sequence, 623 residues long: MATTTPSRSTRSSMQSPARGTSTPLSPTRISRLQEKEELRHLNDRLAVYIDRVRALELENDRLMVKISEKEEVTTREVSGIKNLYESELADARKVLDETARERARLQIELGKFRSDLDELNKNYKKKDADLSTAQGRIKDLEALFHRSEAELGTALGEKRSLEAEVADLRAQLSKTEDAHRVAKKQLEKETLMRVDFENRMQSLQEEMDFRKNIYEEESRETRKRHERRIVEVDRGHHYDYESKLAQALDELRKQHDEQVKMYKEELEQTYQAKLDNIKRSSDHNDKAANTALEELTERRMRIETLGYQLSGLQKQANAAEERIRELEELLSSDRDKYRKLLDSKEREMAEMRDQMQQQLNEYQELLDVKLALDLEINAYRKLLEGEEERLKLSPSPESRVTVSRATSSSSSATRTSRSKRRRVEEEYEEGGASTGFGAGHSLGSSRITASEGSSRTITSGQSSTTRFHLSQQASATGSISIEEIDLEGKYVHLKNNSDKDQSLGNWRLKRKIGEEEEIVYKFTPKYVLKAGQSVKIYSADAGVAHSPPSILVWKNQSSWGTGSNIRTYLVNTEEEEVAVRTVTKSVLRNVEEEEDEDADFGEEDLFHQQGDPRTTSRGCSVM.

Residues 1–18 (MATTTPSRSTRSSMQSPA) are compositionally biased toward low complexity. A disordered region spans residues 1–30 (MATTTPSRSTRSSMQSPARGTSTPLSPTRI). Residues 2–27 (ATTTPSRSTRSSMQSPARGTSTPLSP) are head. Residues 19–30 (RGTSTPLSPTRI) show a composition bias toward polar residues. Serine 26 carries the post-translational modification Phosphoserine. Residues 28–64 (TRISRLQEKEELRHLNDRLAVYIDRVRALELENDRLM) are coil 1A. Positions 35–391 (EKEELRHLND…KLLEGEEERL (357 aa)) constitute an IF rod domain. The tract at residues 64–74 (MVKISEKEEVT) is linker 1. A coil 1B region spans residues 75–211 (TREVSGIKNL…QSLQEEMDFR (137 aa)). The segment at 212 to 235 (KNIYEEESRETRKRHERRIVEVDR) is linker 2. Residues 236–378 (GHHYDYESKL…VKLALDLEIN (143 aa)) form a coil 2 region. Positions 380–592 (YRKLLEGEEE…VTKSVLRNVE (213 aa)) are tail. 2 disordered regions span residues 388–473 (EERL…LSQQ) and 591–623 (VEEE…CSVM). Serine 396 bears the Phosphoserine mark. A compositionally biased stretch (low complexity) spans 398–416 (ESRVTVSRATSSSSSATRT). The short motif at 420 to 425 (KRRRVE) is the Nuclear localization signal element. Polar residues predominate over residues 443–473 (LGSSRITASEGSSRTITSGQSSTTRFHLSQQ). Residues 468-585 (FHLSQQASAT…EEVAVRTVTK (118 aa)) enclose the LTD domain. Over residues 592–604 (EEEEDEDADFGEE) the composition is skewed to acidic residues. Residues 612–623 (DPRTTSRGCSVM) are compositionally biased toward polar residues. Residue cysteine 620 is modified to Cysteine methyl ester. Cysteine 620 carries S-farnesyl cysteine lipidation. The propeptide at 621–623 (SVM) is removed in mature form.

The protein belongs to the intermediate filament family. Post-translationally, phosphorylation plays a key role in lamin organization, subcellular localization and nuclear envelope disintegration. Phosphorylation by CDK1 at Ser-26 at the onset of mitosis drives lamin disassembly and nuclear envelope breakdown.

It localises to the nucleus lamina. The protein resides in the nucleus envelope. It is found in the nucleus. The protein localises to the nucleoplasm. Its subcellular location is the nucleus matrix. Functionally, lamins are intermediate filament proteins that assemble into a filamentous meshwork, and which constitute the major components of the nuclear lamina, a fibrous layer on the nucleoplasmic side of the inner nuclear membrane. Lamins provide a framework for the nuclear envelope, bridging the nuclear envelope and chromatin, thereby playing an important role in nuclear assembly, chromatin organization, nuclear membrane and telomere dynamics. The structural integrity of the lamina is strictly controlled by the cell cycle, as seen by the disintegration and formation of the nuclear envelope in prophase and telophase, respectively. The polypeptide is Lamin-B2.L (lmnb2.L) (Xenopus laevis (African clawed frog)).